Reading from the N-terminus, the 161-residue chain is RNA pyrophosphohydrolase (161 aa).

The Nudix hydrolase domain occupies P12–K154. The short motif at G46–G67 is the Nudix box element.

It belongs to the Nudix hydrolase family. RppH subfamily. A divalent metal cation is required as a cofactor.

Accelerates the degradation of transcripts by removing pyrophosphate from the 5'-end of triphosphorylated RNA, leading to a more labile monophosphorylated state that can stimulate subsequent ribonuclease cleavage. In Rickettsia canadensis (strain McKiel), this protein is RNA pyrophosphohydrolase.